A 370-amino-acid polypeptide reads, in one-letter code: Doublesex- and mab-3-related transcription factor C2 (370 aa).

The interval 1-38 (MDPSETAALHHCSADSSPADEARVPQSTELIPRRPVSR) is disordered. Residues 42-89 (CARCRNHGVTAHLKGHKRLCLFQACECHKCVLILERRRVMAAQVALRR) constitute a DNA-binding region (DM). The segment at 334–356 (APPGGRGFQPVGPPLRPSPGSSV) is disordered.

Belongs to the DMRT family. As to expression, expressed in testis. Highly expressed in ovary.

The protein resides in the nucleus. Functionally, may be involved in sexual development. The chain is Doublesex- and mab-3-related transcription factor C2 (Dmrtc2) from Mus musculus (Mouse).